Consider the following 180-residue polypeptide: ATP-dependent protease subunit HslV (180 aa).

Residue Thr-5 is part of the active site. Gly-165, Cys-168, and Thr-171 together coordinate Na(+).

The protein belongs to the peptidase T1B family. HslV subfamily. As to quaternary structure, a double ring-shaped homohexamer of HslV is capped on each side by a ring-shaped HslU homohexamer. The assembly of the HslU/HslV complex is dependent on binding of ATP.

It is found in the cytoplasm. The catalysed reaction is ATP-dependent cleavage of peptide bonds with broad specificity.. Allosterically activated by HslU binding. Functionally, protease subunit of a proteasome-like degradation complex believed to be a general protein degrading machinery. This chain is ATP-dependent protease subunit HslV, found in Helicobacter pylori (strain J99 / ATCC 700824) (Campylobacter pylori J99).